The chain runs to 207 residues: Large ribosomal subunit protein uL4 (207 aa).

Residues 49 to 78 are disordered; the sequence is HAVKNRSAVRGGGRKPWRQKGTGRARQGSI. Residues 60-71 show a composition bias toward basic residues; the sequence is GGRKPWRQKGTG.

It belongs to the universal ribosomal protein uL4 family. Part of the 50S ribosomal subunit.

In terms of biological role, one of the primary rRNA binding proteins, this protein initially binds near the 5'-end of the 23S rRNA. It is important during the early stages of 50S assembly. It makes multiple contacts with different domains of the 23S rRNA in the assembled 50S subunit and ribosome. Forms part of the polypeptide exit tunnel. The sequence is that of Large ribosomal subunit protein uL4 from Latilactobacillus sakei subsp. sakei (strain 23K) (Lactobacillus sakei subsp. sakei).